The sequence spans 346 residues: tRNA(Ile)-lysidine synthase (346 aa).

32–37 (SGGPDS) contacts ATP.

It belongs to the tRNA(Ile)-lysidine synthase family.

It localises to the cytoplasm. The enzyme catalyses cytidine(34) in tRNA(Ile2) + L-lysine + ATP = lysidine(34) in tRNA(Ile2) + AMP + diphosphate + H(+). In terms of biological role, ligates lysine onto the cytidine present at position 34 of the AUA codon-specific tRNA(Ile) that contains the anticodon CAU, in an ATP-dependent manner. Cytidine is converted to lysidine, thus changing the amino acid specificity of the tRNA from methionine to isoleucine. The chain is tRNA(Ile)-lysidine synthase from Rhodopseudomonas palustris (strain ATCC BAA-98 / CGA009).